Reading from the N-terminus, the 172-residue chain is CD-NTase-associated protein 7 (172 aa).

The interval 141-172 (AQSPGINGYLENDKTYSAGGRSLTRTSVRNFV) is required for binding to CdnC and to confer phage immunity.

The protein belongs to the bacterial HORMA family. HORMA1 subfamily. As to quaternary structure, forms complexes with CdnC with 1:1 and 2:2 stoichimetry, and a 1:1:6 CdnC:Cap7:Cap6 complex.

Functionally, sensor protein of a CBASS antivirus system. CBASS (cyclic oligonucleotide-based antiphage signaling system) provides immunity against bacteriophage. The CD-NTase protein synthesizes cyclic nucleotides in response to infection; these serve as specific second messenger signals. The signals activate a diverse range of effectors, leading to bacterial cell death and thus abortive phage infection. A type III-C(AAA) CBASS system. Its function is as follows. Binds to a closure peptide (consensus His-Xaa-Xaa-Ile-Leu-Leu-Thr), which allows it to activate CdnC for second messenger synthesis. In terms of biological role, protects E.coli strain JP313 against bacteriophage lambda cI- infection. When the cdnC-cap7-cap6-nucC operon is transformed into a susceptible strain it confers bacteriophage immunity. Mutations in the sensor (Cap7 also called HORMA) or effector proteins (CdnC, NucC) but not the disassembly protein (Cap6 also called Trip13) no longer confer immunity. The presence of the intact operon leads to culture collapse and cell death, which occurs before the phage has finished its replication cycle, thus protecting non-infected bacteria by aborting the phage infection and preventing its propagation. In Escherichia coli (strain MS 115-1), this protein is CD-NTase-associated protein 7.